Reading from the N-terminus, the 152-residue chain is Ribosomal RNA large subunit methyltransferase H (152 aa).

S-adenosyl-L-methionine-binding positions include L71, G101, and 120-125; that span reads LSKLTF.

Belongs to the RNA methyltransferase RlmH family. Homodimer.

The protein resides in the cytoplasm. The enzyme catalyses pseudouridine(1915) in 23S rRNA + S-adenosyl-L-methionine = N(3)-methylpseudouridine(1915) in 23S rRNA + S-adenosyl-L-homocysteine + H(+). Its function is as follows. Specifically methylates the pseudouridine at position 1915 (m3Psi1915) in 23S rRNA. In Thermosipho melanesiensis (strain DSM 12029 / CIP 104789 / BI429), this protein is Ribosomal RNA large subunit methyltransferase H.